Here is a 387-residue protein sequence, read N- to C-terminus: Methionine aminopeptidase 1 (387 aa).

The residue at position 2 (Ser2) is an N-acetylserine. Residues 2–10 constitute a propeptide that is removed on maturation; the sequence is STATTTVTT. Residues 19 to 73 form a C6H2-type zinc finger; that stretch reads KIYCSGLQCGRETSSQMKCPVCLKQGIVSIFCDTSCYENNYKAHKALHNAKDGLE. Residues Cys22, Cys27, Cys37, Cys40, Cys50, Cys54, His62, and His66 each contribute to the Zn(2+) site. His202 is a binding site for a protein. Zn(2+) is bound by residues Asp219, Asp230, and His294. His301 lines the a protein pocket. Glu327 and Glu358 together coordinate Zn(2+).

This sequence belongs to the peptidase M24A family. Methionine aminopeptidase type 1 subfamily. Associates with the 60S ribosomal subunit of the 80S translational complex. Requires Zn(2+) as cofactor. Co(2+) serves as cofactor. Mn(2+) is required as a cofactor. It depends on Fe(2+) as a cofactor.

It is found in the cytoplasm. The enzyme catalyses Release of N-terminal amino acids, preferentially methionine, from peptides and arylamides.. With respect to regulation, in contract to the MetAP 2 isoform, is not inhibited by the fungal metabolite fumagillin, an antiangiogenic drug. Its function is as follows. Cotranslationally removes the N-terminal methionine from nascent proteins. The N-terminal methionine is often cleaved when the second residue in the primary sequence is small and uncharged (Met-Ala-, Cys, Gly, Pro, Ser, Thr, or Val). Plays the major role in N-terminal methionine removal. Less efficient when the second residue is Val. The protein is Methionine aminopeptidase 1 (MAP1) of Saccharomyces cerevisiae (strain ATCC 204508 / S288c) (Baker's yeast).